Consider the following 66-residue polypeptide: Protein translocase subunit SecE (66 aa).

The chain crosses the membrane as a helical span at residues 29–49 (LVASTLVVVVAVFIFSLTCLV).

It belongs to the SecE/SEC61-gamma family. Component of the Sec protein translocase complex. Heterotrimer consisting of SecY, SecE and SecG subunits. The heterotrimers can form oligomers, although 1 heterotrimer is thought to be able to translocate proteins. Interacts with the ribosome. Interacts with SecDF, and other proteins may be involved. Interacts with SecA.

Its subcellular location is the cell inner membrane. In terms of biological role, essential subunit of the Sec protein translocation channel SecYEG. Clamps together the 2 halves of SecY. May contact the channel plug during translocation. In Rickettsia rickettsii, this protein is Protein translocase subunit SecE.